A 1744-amino-acid polypeptide reads, in one-letter code: MDFGSVMNQAATPCSPAVNYELPSPGQSITKQVDTPDATRSPRGGQAHRKASRSMSVTAAMESSCELDLVYITERIIAVSYPSTAEEQSFRSNLREVAHMLKSKHGDNYVLFNLSERRHDISKLHPKVLDFGWPDLHTPALEKICSICKAMDTWLNAAAHNVVVLHNKGNRGRLGVVVAAYMHYSNISASADQALDRFAMKRFYEDKVVPVGQPSQKRYIHYFSGLLSGSIKMNNKPLFLHHVIMHGIPNFESKGGCRPFLKIYQAMQPVYTSGIYNVQGDSQTGICITIEPGLLLKGDILLKCYHKKFRSPTRDVIFRVQFHTCAVHDLDIVFGKEDLDEAFRDERFPEYGKVEFVFSYGPEKIQGMEHLENGPSVSVDYNTSDPLIRWDSYENFNIQREDSTEGTWAEPALPGKHLEKEVGHTQGPLDGSLYAKVKKKDSLHGSIGAVNAARLPLSAAPNHVEHTLSVSSDSGNSTASTKTDRTDEPGAPGAPTGHAVLSPEEKRELDRLLVGFGLESAPPMHNHAPGPAPARLPAGPGRHVVPAQVHVNGAGTPLLAERETDILDDELPNQDGHSVGSLGTLSSLDGTTTASEAGFHEAPRVGSLSSLPNGPASYNGAEKMLKEGLYEAEPLSNGAYPYSNQNTLMGHHLRDPLAHLRPSASAQEHLAGYPQRQPASTSPAWLQPPVPQPYLYGYDLPSAHRSQSFPAVGTAKYEANLALPQAPARSTSSREAVQRGLNSWQQQGGSRPPSQLHDGGLESHSPSLSSCSPQPSPLQPMPPHSHSMPEFPRAPSRREIEQSIEALDVLMLDLAPSVHKSQSVPSAATRQDKPAAMLSSLSAQPLSGHYAQPTPQVVQPRSFGTSVGTDPLAKAYSPGPLVPAARSTAEPDYTVHEYRETYTPYSYQPVPEPRSYGSAPASILPLSASYSPAGSQQLLVSSPPSPTAPAQSQLPHKGLESYEDLSRSGEEPLNLEGLVAHRVAGVQSREKSPEESTVPARRRTPSDSHYEKSSPEPGSPRSPTVLSPEVVSTIAANPGGRPKEPHLHSYKEAFEEMESASPSSLTSGGVRSPPGLAKTPLSALGLKPHNPADILLHPVGELEGEAGADSEEEPRSYVESVARTATTGRAGNLPAAQPVGLEVPARNGAFGNSFTVPSPVSTSSPIHSVDGASLRSYPSEGSPHGTVTPPHAVAETAYRSPMVSQTPSAHSSYQTSSPSSFQAGTLGSPYASPDYPDGRAGFQPDPQARQQPQVSVVGVHALPGSPRTLHRTVATNTPPSPGFGRRAANPAVASVPGSPGLGRHTVSPHAPPGSPSLARHQMAAVPPGSPMYGYSSPEERRPTLSRQSSASGYQPPSTPSFPVSPAYYPGTSTPHSSSPDSAAYRQGSPTPQPALPEKRRMSAGERSNSLPNYATVNGKASSPLSSGMSSPSSGSAVAFSHTLPDFSKFSMPDISPETRANVKFVQDTSKYWYKPDISREQAIALLKDREPGAFIIRDSHSFRGAYGLAMKVASPPPTVMQQNKKGDITNELVRHFLIETSPRGVKLKGCPNEPNFGCLSALVYQHSIMPLALPCKLVIPDRDPMEEKKDAASTTNSATDLLKQGAACNVLFINSVEMESLTGPQAISKAVAETLVADPTPTATIVHFKVSAQGITLTDNQRKLFFRRHYPLNTVTFCDLDPQERKWTKTDGSGPAKLFGFVARKQGSTTDNVCHLFAELDPDQPAAAIVNFVSRVMLGSGQKR.

The tract at residues 15 to 55 (SPAVNYELPSPGQSITKQVDTPDATRSPRGGQAHRKASRSM) is disordered. Residues 58-230 (TAAMESSCEL…HYFSGLLSGS (173 aa)) form the Phosphatase tensin-type domain. Residues 235-361 (NKPLFLHHVI…GKVEFVFSYG (127 aa)) form the C2 tensin-type domain. Disordered regions lie at residues 467-505 (TLSV…SPEE), 569-589 (DELP…SSLD), 666-686 (AQEH…PAWL), 724-797 (PQAP…APSR), 934-956 (GSQQ…QLPH), 982-1077 (RVAG…PGLA), and 1156-1437 (VPSP…GSAV). Residues 468 to 481 (LSVSSDSGNSTAST) show a composition bias toward polar residues. Residues 580–589 (GSLGTLSSLD) show a composition bias toward low complexity. Residues 728–753 (ARSTSSREAVQRGLNSWQQQGGSRPP) are compositionally biased toward polar residues. Residues 763-773 (SHSPSLSSCSP) show a composition bias toward low complexity. The span at 774–783 (QPSPLQPMPP) shows a compositional bias: pro residues. Composition is skewed to basic and acidic residues over residues 1004–1014 (TPSDSHYEKSS) and 1041–1054 (RPKE…KEAF). Polar residues predominate over residues 1060–1069 (ASPSSLTSGG). Low complexity-rich tracts occupy residues 1156-1169 (VPSP…IHSV) and 1208-1220 (SAHS…SPSS). Composition is skewed to polar residues over residues 1344 to 1355 (LSRQSSASGYQP), 1370 to 1380 (GTSTPHSSSPD), and 1405 to 1420 (ERSN…NGKA). A compositionally biased stretch (low complexity) spans 1421–1435 (SSPLSSGMSSPSSGS). The SH2 domain maps to 1472–1581 (WYKPDISREQ…ALPCKLVIPD (110 aa)). Residues 1607-1743 (ACNVLFINSV…SRVMLGSGQK (137 aa)) form the PTB domain.

This sequence belongs to the PTEN phosphatase protein family. As to quaternary structure, binds to actin filaments. Interacts with phosphotyrosine-containing proteins. Tyrosine phosphorylated. As to expression, heart, gizzard, lung and skeletal muscle.

Its subcellular location is the cell surface. The protein resides in the cell junction. It localises to the focal adhesion. The protein localises to the cytoplasm. It is found in the cytoskeleton. In terms of biological role, may act as a protein phosphatase and/or a lipid phosphatase. Involved in fibrillar adhesion formation. Plays a role in cell polarization and migration. May be involved in cartilage development and in linking signal transduction pathways to the cytoskeleton. The chain is Tensin-1 (TNS1) from Gallus gallus (Chicken).